A 539-amino-acid polypeptide reads, in one-letter code: CTP synthase (539 aa).

The amidoligase domain stretch occupies residues 1–267; it reads MTKFIFVTGG…DDLVIKRLDL (267 aa). Ser13 contributes to the CTP binding site. Position 13 (Ser13) interacts with UTP. 14–19 is a binding site for ATP; sequence SLGKGI. Tyr54 provides a ligand contact to L-glutamine. Asp71 contributes to the ATP binding site. Positions 71 and 141 each coordinate Mg(2+). Residues 148–150, 188–193, and Lys224 each bind CTP; these read DIE and KTKPTQ. UTP-binding positions include 188-193 and Lys224; that span reads KTKPTQ. 240–242 serves as a coordination point for ATP; sequence RDA. The region spanning 293 to 535 is the Glutamine amidotransferase type-1 domain; sequence TIGLVGKYVS…IEAANKYKEA (243 aa). Gly355 is an L-glutamine binding site. The Nucleophile; for glutamine hydrolysis role is filled by Cys382. L-glutamine-binding positions include 383–386, Glu406, and Arg463; that span reads LGMQ. Residues His508 and Glu510 contribute to the active site.

Belongs to the CTP synthase family. As to quaternary structure, homotetramer.

It catalyses the reaction UTP + L-glutamine + ATP + H2O = CTP + L-glutamate + ADP + phosphate + 2 H(+). The catalysed reaction is L-glutamine + H2O = L-glutamate + NH4(+). It carries out the reaction UTP + NH4(+) + ATP = CTP + ADP + phosphate + 2 H(+). It participates in pyrimidine metabolism; CTP biosynthesis via de novo pathway; CTP from UDP: step 2/2. Its activity is regulated as follows. Allosterically activated by GTP, when glutamine is the substrate; GTP has no effect on the reaction when ammonia is the substrate. The allosteric effector GTP functions by stabilizing the protein conformation that binds the tetrahedral intermediate(s) formed during glutamine hydrolysis. Inhibited by the product CTP, via allosteric rather than competitive inhibition. In terms of biological role, catalyzes the ATP-dependent amination of UTP to CTP with either L-glutamine or ammonia as the source of nitrogen. Regulates intracellular CTP levels through interactions with the four ribonucleotide triphosphates. This chain is CTP synthase, found in Staphylococcus carnosus (strain TM300).